The following is a 366-amino-acid chain: MEVYTIKEGKKLRYGYTTGSCAAAASKAATYMLFTGEKIDTVEIDTPKGWHLILDVLDVTSGEGWVKCGIRKDGGDDPDATHGLIIYSKVELKEGEGIDVYGGEGVGVVTKPGLPVNPGKPAINPVPMSMILNEVKKVLPEGKGVKITISVPGGEKVALKTFNPRLGIVGGISILGTSGIVEPMSEEALKSSLELELSILSAEGHKKVVFAPGNYGKDYAMKEGLEERLIISYGNFLGFMLEKAVEYGFTHVVLAGHIGKLVKVAAGIFNTHSHVADARAEIMAAYVAHFGADKKTVDKVLDSNTTEEALDIIEKAGVNIKDFSQFIADRVYMKCKQYVYDKLNIEVHLISLKRGIIAKAGEKVEW.

The protein belongs to the CbiD family.

The catalysed reaction is Co-precorrin-5B + S-adenosyl-L-methionine = Co-precorrin-6A + S-adenosyl-L-homocysteine. It participates in cofactor biosynthesis; adenosylcobalamin biosynthesis; cob(II)yrinate a,c-diamide from sirohydrochlorin (anaerobic route): step 6/10. In terms of biological role, catalyzes the methylation of C-1 in cobalt-precorrin-5B to form cobalt-precorrin-6A. The polypeptide is Cobalt-precorrin-5B C(1)-methyltransferase (Thermoanaerobacter sp. (strain X514)).